The chain runs to 347 residues: 5-deoxyribose 1-phosphate isomerase (347 aa).

Residues 48–50, Arg-91, and Gln-198 each bind substrate; that span reads RGA. The active-site Proton donor is Asp-239. 249–250 serves as a coordination point for substrate; the sequence is NK.

The protein belongs to the EIF-2B alpha/beta/delta subunits family. DrdI subfamily.

It carries out the reaction 5-deoxy-alpha-D-ribose 1-phosphate = 5-deoxy-D-ribulose 1-phosphate. Its pathway is carbohydrate degradation. Catalyzes the isomerization of 5-deoxy-alpha-D-ribose 1-phosphate to 5-deoxy-D-ribulose 1-phosphate, as part of a 5-deoxyribose salvage pathway that recycles this toxic radical SAM enzyme by-product to mainstream metabolites. This Bacillus cereus (strain ATCC 14579 / DSM 31 / CCUG 7414 / JCM 2152 / NBRC 15305 / NCIMB 9373 / NCTC 2599 / NRRL B-3711) protein is 5-deoxyribose 1-phosphate isomerase.